The primary structure comprises 120 residues: Alanine racemase (120 aa).

Y24 functions as the Proton acceptor; specific for L-alanine in the catalytic mechanism.

The protein belongs to the alanine racemase family. In terms of assembly, homodimer. Requires pyridoxal 5'-phosphate as cofactor.

The catalysed reaction is L-alanine = D-alanine. In terms of biological role, highly specific to D- and L-alanine and does not catalyze the racemization of other amino acids. The sequence is that of Alanine racemase from Penaeus monodon (Giant tiger prawn).